A 369-amino-acid polypeptide reads, in one-letter code: UDP-N-acetylglucosamine--N-acetylmuramyl-(pentapeptide) pyrophosphoryl-undecaprenol N-acetylglucosamine transferase (369 aa).

Residues T16–G18, N130, R171, S203, I253, and Q298 contribute to the UDP-N-acetyl-alpha-D-glucosamine site.

The protein belongs to the glycosyltransferase 28 family. MurG subfamily.

It is found in the cell inner membrane. It carries out the reaction di-trans,octa-cis-undecaprenyl diphospho-N-acetyl-alpha-D-muramoyl-L-alanyl-D-glutamyl-meso-2,6-diaminopimeloyl-D-alanyl-D-alanine + UDP-N-acetyl-alpha-D-glucosamine = di-trans,octa-cis-undecaprenyl diphospho-[N-acetyl-alpha-D-glucosaminyl-(1-&gt;4)]-N-acetyl-alpha-D-muramoyl-L-alanyl-D-glutamyl-meso-2,6-diaminopimeloyl-D-alanyl-D-alanine + UDP + H(+). It functions in the pathway cell wall biogenesis; peptidoglycan biosynthesis. Cell wall formation. Catalyzes the transfer of a GlcNAc subunit on undecaprenyl-pyrophosphoryl-MurNAc-pentapeptide (lipid intermediate I) to form undecaprenyl-pyrophosphoryl-MurNAc-(pentapeptide)GlcNAc (lipid intermediate II). The polypeptide is UDP-N-acetylglucosamine--N-acetylmuramyl-(pentapeptide) pyrophosphoryl-undecaprenol N-acetylglucosamine transferase (Cytophaga hutchinsonii (strain ATCC 33406 / DSM 1761 / CIP 103989 / NBRC 15051 / NCIMB 9469 / D465)).